Reading from the N-terminus, the 244-residue chain is 1-(5-phosphoribosyl)-5-[(5-phosphoribosylamino)methylideneamino] imidazole-4-carboxamide isomerase (244 aa).

Residue Asp12 is the Proton acceptor of the active site. Residue Asp131 is the Proton donor of the active site.

Belongs to the HisA/HisF family.

Its subcellular location is the cytoplasm. It carries out the reaction 1-(5-phospho-beta-D-ribosyl)-5-[(5-phospho-beta-D-ribosylamino)methylideneamino]imidazole-4-carboxamide = 5-[(5-phospho-1-deoxy-D-ribulos-1-ylimino)methylamino]-1-(5-phospho-beta-D-ribosyl)imidazole-4-carboxamide. The protein operates within amino-acid biosynthesis; L-histidine biosynthesis; L-histidine from 5-phospho-alpha-D-ribose 1-diphosphate: step 4/9. The chain is 1-(5-phosphoribosyl)-5-[(5-phosphoribosylamino)methylideneamino] imidazole-4-carboxamide isomerase from Nocardioides sp. (strain ATCC BAA-499 / JS614).